A 425-amino-acid polypeptide reads, in one-letter code: UDP-N-acetylglucosamine 1-carboxyvinyltransferase (425 aa).

22 to 23 (KN) provides a ligand contact to phosphoenolpyruvate. Arg93 provides a ligand contact to UDP-N-acetyl-alpha-D-glucosamine. The active-site Proton donor is Asp117. The UDP-N-acetyl-alpha-D-glucosamine site is built by Asp312 and Met334.

It belongs to the EPSP synthase family. MurA subfamily.

It is found in the cytoplasm. The enzyme catalyses phosphoenolpyruvate + UDP-N-acetyl-alpha-D-glucosamine = UDP-N-acetyl-3-O-(1-carboxyvinyl)-alpha-D-glucosamine + phosphate. It functions in the pathway cell wall biogenesis; peptidoglycan biosynthesis. Cell wall formation. Adds enolpyruvyl to UDP-N-acetylglucosamine. The chain is UDP-N-acetylglucosamine 1-carboxyvinyltransferase from Treponema pallidum (strain Nichols).